Here is a 292-residue protein sequence, read N- to C-terminus: Nanos homolog 1 (292 aa).

Disordered stretches follow at residues 1–41 (MEAF…QPFS) and 68–121 (GGNG…SRGR). Residues 40–56 (FSSWNDYLGLATLITKA) form an essential for its translational repressor activity region. Low complexity predominate over residues 76 to 87 (PPSSSSSSCCSP). Positions 104-115 (DYDEDDDDDSDE) are enriched in acidic residues. The Nanos-type zinc finger occupies 213–267 (VCVFCRNNKEAMALYTTHILKGPDGRVLCPVLRRYTCPLCGASGDNAHTIKYCPL). 8 residues coordinate Zn(2+): cysteine 214, cysteine 217, histidine 230, cysteine 241, cysteine 249, cysteine 252, histidine 260, and cysteine 265. 2 consecutive short sequence motifs (C2HC) follow at residues 214-241 (CVFC…RVLC) and 249-265 (CPLC…IKYC). The disordered stretch occupies residues 268–292 (SKVPPPPARPPPRSARDGPPGKKLR). Positions 269 to 280 (KVPPPPARPPPR) are enriched in pro residues. The segment covering 281–292 (SARDGPPGKKLR) has biased composition (basic and acidic residues).

The protein belongs to the nanos family. In terms of assembly, interacts with PUM2, SNAPIN and CTNNB1. Interacts (via N-terminal region) with CTNND1. Interacts with DDX20 (via N-terminal region). In terms of tissue distribution, testis and ovary (at protein level). Predominantly expressed in testis. Specifically expressed during germline development. In adult tissues, it is mainly expressed in spermatogonia, the stem cells of the germline. Also expressed during meiosis in spermatocytes. Not present in late, post-meiotic stage germ cells. Expressed in fetal ovaries, while it is weakly or not expressed in mature postmeiotic oocytes, suggesting that it may be expressed in premeiotic female germ cells. Expressed at high levels only in the E-cadherin deficient cell lines. Highly expressed in lung carcinomas and mostly detected in invasive tumor cells and its expression correlates with tumor aggressiveness.

Its subcellular location is the cytoplasm. The protein localises to the perinuclear region. Functionally, may act as a translational repressor which regulates translation of specific mRNAs by forming a complex with PUM2 that associates with the 3'-UTR of mRNA targets. Capable of interfering with the proadhesive and anti-invasive functions of E-cadherin. Up-regulates the production of MMP14 to promote tumor cell invasion. This is Nanos homolog 1 (NANOS1) from Homo sapiens (Human).